Consider the following 236-residue polypeptide: Small ribosomal subunit protein uS3 (236 aa).

The region spanning 39 to 112 is the KH type-2 domain; it reads IREFITKHPK…RINLKVEEVG (74 aa). The segment at 212-236 is disordered; sequence YGDDNDGADAQTGQASKKPKRSYKR.

This sequence belongs to the universal ribosomal protein uS3 family. As to quaternary structure, part of the 30S ribosomal subunit. Forms a tight complex with proteins S10 and S14.

In terms of biological role, binds the lower part of the 30S subunit head. Binds mRNA in the 70S ribosome, positioning it for translation. This is Small ribosomal subunit protein uS3 from Rhodopirellula baltica (strain DSM 10527 / NCIMB 13988 / SH1).